A 289-amino-acid polypeptide reads, in one-letter code: Deleted in azoospermia-like (289 aa).

The segment at 1 to 20 (MSANAEAQCGSISEDNTHSS) is disordered. The region spanning 36–117 (NTVFVGGIDI…PAIRKQQNLC (82 aa)) is the RRM domain. Residues 162–187 (TYAYSSPAVLIQQQVPVGYQPAYNYQ) enclose the DAZ domain.

Belongs to the RRM DAZ family.

Its subcellular location is the cytoplasm. Functionally, RNA-binding protein, which probably plays a central role in gametogenesis in both males and females. Acts by binding to the 3'-UTR of mRNA, specifically recognizing GUU triplets, and promoting the translation of key transcripts. In Gallus gallus (Chicken), this protein is Deleted in azoospermia-like (DAZL).